Here is a 138-residue protein sequence, read N- to C-terminus: Basic phospholipase A2 ammodytoxin C (138 aa).

The first 16 residues, 1 to 16 (MRTLWIVAVCLIGVEG), serve as a signal peptide directing secretion. Cystine bridges form between Cys42–Cys131, Cys44–Cys60, Cys59–Cys111, Cys65–Cys138, Cys66–Cys104, Cys73–Cys97, and Cys91–Cys102. The Ca(2+) site is built by Tyr43, Gly45, and Gly47. The active site involves His63. Asp64 contributes to the Ca(2+) binding site. The active site involves Asp105.

Belongs to the phospholipase A2 family. Group II subfamily. D49 sub-subfamily. Monomer. Binds to calmodulin, coagulation factor X (F10), 14-3-3 proteins gamma (YWHAG) and epsilon (YWHAE), and R25, a mitochondrial membrane protein. May bind to M-type PLA2 receptor (R-180). Requires Ca(2+) as cofactor. In terms of tissue distribution, expressed by the venom gland.

It is found in the secreted. Its subcellular location is the host cytoplasm. The protein resides in the host cytosol. The catalysed reaction is a 1,2-diacyl-sn-glycero-3-phosphocholine + H2O = a 1-acyl-sn-glycero-3-phosphocholine + a fatty acid + H(+). Its function is as follows. Snake venom phospholipase A2 (PLA2) that acts as a presynaptic neurotoxin, an inhibitor of blood coagulation, and has been found to bind with high affinity to intracellular proteins. The response of indirectly stimulated neuromuscular preparations to ammodytoxin (Atx) is triphasic. The first phase, the transient inhibition of the acetylcholine (ACh) release, starts soon after the addition of Atx and lasts for several minutes. This phase is probably independent of Atx enzymatic activity. The effect may be due to the specific binding of the toxin to presynaptic receptors. These receptors, called N-type receptors, are still unidentified. It is noteworthy that a neuronal isoform of the M-type PLA2 receptor (R180) has been identified as a high-affinity receptor for Atx in neuronal plasma membranes. It was demonstrated however that this receptor is not essential for expression of neurotoxicity by Atx. The second phase corresponds to an augmentation of neurotransmitter release. A peak is reached 10-20 minutes after exposure of the preparation to Atx and is followed by a gradual reduction. In this phase, the enzymatic activity of Atx of the mammalian is not significant. It is speculated that the increased release of neurotransmitter in this phase is induced by the interference of Atx with voltage-gated potassium channels. Measurements of ionic showed however that voltage-gated potassium channels are not affected by Atx. The third phase of the response of neuromuscular preparations to Atx, which corresponds to a complete and irreversible paralysis, is clearly dependent on the hydrolytic activity of the toxin. In addition to its presynaptic neurotoxicity, Atx shows an anticoagulant activity by binding with high affinity to activated coagulation factor X (F10) thus inhibiting the formation of the prothrombinase complex (FX/FV) and its activity (IC(50) is 240 nM). Surprisingly, Atx was discovered to bind intracellular proteins such as calmodulin (CaM), 14-3-3 proteins gamma (YWHAG) and epsilon (YWHAE), as well as R25, a mitochondrial integral membrane protein found in cerebral cortex. These findings raised a doubt about the dogma of the exclusively extracellular action of PLA2s, defended by the potential instability of these molecules in the reducing environment of the eukaryotic cytosol coupled with their possible inability to act as enzymes in this cellular compartment, due to too low concentration of calcium ions. This hypothesis was challenged efficiently by demonstrating the internalization of AtxA into a culture cells, but still remains to be directly demonstrated in vivo. PLA2 catalyzes the calcium-dependent hydrolysis of the 2-acyl groups in 3-sn-phosphoglycerides. The polypeptide is Basic phospholipase A2 ammodytoxin C (Vipera ammodytes ammodytes (Western sand viper)).